The sequence spans 147 residues: Hemoglobin subunit beta (147 aa).

One can recognise a Globin domain in the interval 2–147; that stretch reads ELTEAQRGAI…VVSALGKQYH (146 aa). Heme b contacts are provided by His-63 and His-92.

It belongs to the globin family. Heterotetramer of two alpha chains and two beta chains. In terms of tissue distribution, red blood cells.

Involved in oxygen transport from gills to the various peripheral tissues. The sequence is that of Hemoglobin subunit beta (hbb) from Electrophorus electricus (Electric eel).